Consider the following 170-residue polypeptide: Putative 4-hydroxy-4-methyl-2-oxoglutarate aldolase (170 aa).

Substrate is bound by residues 85–88 (GDMI) and Arg-107. Asp-108 lines the a divalent metal cation pocket.

This sequence belongs to the class II aldolase/RraA-like family. Homotrimer. Requires a divalent metal cation as cofactor.

It carries out the reaction 4-hydroxy-4-methyl-2-oxoglutarate = 2 pyruvate. It catalyses the reaction oxaloacetate + H(+) = pyruvate + CO2. Its function is as follows. Catalyzes the aldol cleavage of 4-hydroxy-4-methyl-2-oxoglutarate (HMG) into 2 molecules of pyruvate. Also contains a secondary oxaloacetate (OAA) decarboxylase activity due to the common pyruvate enolate transition state formed following C-C bond cleavage in the retro-aldol and decarboxylation reactions. The chain is Putative 4-hydroxy-4-methyl-2-oxoglutarate aldolase from Acinetobacter baylyi (strain ATCC 33305 / BD413 / ADP1).